Here is a 366-residue protein sequence, read N- to C-terminus: Chitoporin (366 aa).

Positions 1–23 (MDKMFKRTVIGAAVALASTGLMA) are cleaved as a signal peptide.

The protein belongs to the Gram-negative porin family.

The protein localises to the cell outer membrane. Functionally, involved in the uptake of chitosugars. This chain is Chitoporin (chiP), found in Vibrio furnissii.